The chain runs to 87 residues: Defensin-like protein 100 (87 aa).

The first 29 residues, 1–29 (MRSLRLRTVVVATIVVCLSVLLSPTEVDG), serve as a signal peptide directing secretion. 4 cysteine pairs are disulfide-bonded: C31/C79, C38/C64, C44/C76, and C48/C78.

The protein belongs to the DEFL family.

It is found in the secreted. The chain is Defensin-like protein 100 from Arabidopsis thaliana (Mouse-ear cress).